The sequence spans 275 residues: Small ribosomal subunit protein uS2 (275 aa).

Residues 232-256 form a disordered region; sequence ARATDGKPEPEPVPGQELGADEPLA.

This sequence belongs to the universal ribosomal protein uS2 family.

In Acidothermus cellulolyticus (strain ATCC 43068 / DSM 8971 / 11B), this protein is Small ribosomal subunit protein uS2.